The primary structure comprises 66 residues: Large ribosomal subunit protein bL35 (66 aa).

Over residues 1–24 the composition is skewed to basic residues; the sequence is MPKQKTHRGAAKRFKKTGSGKLKR. The tract at residues 1–26 is disordered; that stretch reads MPKQKTHRGAAKRFKKTGSGKLKRDH.

The protein belongs to the bacterial ribosomal protein bL35 family.

The polypeptide is Large ribosomal subunit protein bL35 (Bacillus cytotoxicus (strain DSM 22905 / CIP 110041 / 391-98 / NVH 391-98)).